A 483-amino-acid chain; its full sequence is MKHKPETAAFSLIRPLEAWAANANKACNTKKMLPCLGRKWMRLSTRNLKPTWNLINVVDASKTIVRGISGGAETIAKERVDTVVIGAGVVGLAVARELSLRGREVLILDAASSFGTVTSSRNSEVVHAGIYYPPNSLKAKFCVRGRELLYKYCSEYEIPHKKIGKLIVATGSSEIPKLDLLMHLGTQNRVSGLRMLEGFEAMRMEPQLRCVKALLSPESGILDTHSFMLSLVEKSFDFMVYRDNNNLRLQGEAQNNHATFSYNTVVLNGRVEEKKMHLYVADTRFSESRCEAEAQLELIPNLVVNSAGLGAQALAKRLHGLDHRFVPSSHYARGCYFTLSGIKAPPFNKLVYPIPEEGGLGVHVTVDLNGLVKFGPDVEWIECTDDTSSFLNKFDYRVNPQRSEKFYPEIRKYYPDLKDGSLEPGYSGIRPKLSGPKQSPADFVIQGEETHGVPGLVNLFGIESPGLTSSLAIAEHIANKFLR.

Residues 1 to 67 (MKHKPETAAF…VDASKTIVRG (67 aa)) constitute a mitochondrion transit peptide.

The protein belongs to the L2HGDH family. FAD is required as a cofactor.

The protein localises to the mitochondrion. The enzyme catalyses (S)-2-hydroxyglutarate + A = 2-oxoglutarate + AH2. Catalyzes the oxidation of (S)-2-hydroxyglutarate to 2-oxoglutarate. Is specific for the (S) enantiomer and possesses very poor activity toward (R)-2-hydroxyglutarate. Has no activity toward related 2-hydroxy acids, such as glycolate, L-lactate or D-lactate. The protein is L-2-hydroxyglutarate dehydrogenase, mitochondrial of Arabidopsis thaliana (Mouse-ear cress).